The primary structure comprises 426 residues: Enolase (426 aa).

Glutamine 163 is a (2R)-2-phosphoglycerate binding site. Glutamate 205 serves as the catalytic Proton donor. Positions 242, 286, and 313 each coordinate Mg(2+). Positions 338, 367, 368, and 389 each coordinate (2R)-2-phosphoglycerate. Lysine 338 acts as the Proton acceptor in catalysis.

Belongs to the enolase family. It depends on Mg(2+) as a cofactor.

The protein resides in the cytoplasm. The protein localises to the secreted. It localises to the cell surface. The catalysed reaction is (2R)-2-phosphoglycerate = phosphoenolpyruvate + H2O. Its pathway is carbohydrate degradation; glycolysis; pyruvate from D-glyceraldehyde 3-phosphate: step 4/5. In terms of biological role, catalyzes the reversible conversion of 2-phosphoglycerate (2-PG) into phosphoenolpyruvate (PEP). It is essential for the degradation of carbohydrates via glycolysis. The protein is Enolase of Helicobacter pylori (strain ATCC 700392 / 26695) (Campylobacter pylori).